The sequence spans 277 residues: Large ribosomal subunit protein uL2m (277 aa).

The segment at 225 to 263 is disordered; sequence AMNPVDHPHGGGEGKTSGGRPSVTPWSWPTKGQPTRSKR. The span at 248–259 shows a compositional bias: polar residues; that stretch reads TPWSWPTKGQPT.

It belongs to the universal ribosomal protein uL2 family.

The protein resides in the mitochondrion. This is Large ribosomal subunit protein uL2m (RPL2) from Reclinomonas americana.